The following is a 701-amino-acid chain: Elongation factor G 1 (701 aa).

A tr-type G domain is found at 8–290 (ERYRNIGISA…AVIDYLPSPL (283 aa)). GTP-binding positions include 17–24 (AHIDAGKT), 88–92 (DTPGH), and 142–145 (NKMD).

Belongs to the TRAFAC class translation factor GTPase superfamily. Classic translation factor GTPase family. EF-G/EF-2 subfamily.

It is found in the cytoplasm. Catalyzes the GTP-dependent ribosomal translocation step during translation elongation. During this step, the ribosome changes from the pre-translocational (PRE) to the post-translocational (POST) state as the newly formed A-site-bound peptidyl-tRNA and P-site-bound deacylated tRNA move to the P and E sites, respectively. Catalyzes the coordinated movement of the two tRNA molecules, the mRNA and conformational changes in the ribosome. In Paraburkholderia xenovorans (strain LB400), this protein is Elongation factor G 1.